Here is a 449-residue protein sequence, read N- to C-terminus: MMLGAEGGEGFVVKVRGLPWSCSADEVQRFFSDCKIQNGAQGIRFIYTREGRPSGEAFVELESEDEVKLALKKDRETMGHRYVEVFKSNNVEMDWVLKHTGPNSPDTANDGFVRLRGLPFGCSKEEIVQFFSGLEIVPNGITLPVDFQGRSTGEAFVQFASQEIAEKALKKHKERIGHRYIEIFKSSRAEVRTHYDPPRKLMAMQRPGPYDRPGAGRGYNSIGRGAGFERMRRGAYGGGYGGYDDYNGYNDGYGFGSDRFGRDLNYCFSGMSDHRYGDGGSTFQSTTGHCVHMRGLPYRATENDIYNFFSPLNPVRVHIEIGPDGRVTGEADVEFATHEDAVAAMSKDKANMQHRYVELFLNSTAGASGGAYEHRYVELFLNSTAGASGGAYGSQMMGGMGLSNQSSYGGPASQQLSGGYGGGYGGQSSMSGYDQVLQENSSDFQSNIA.

Met-1 is modified (N-acetylmethionine). Met-2 is subject to N-acetylmethionine; in Heterogeneous nuclear ribonucleoprotein H, N-terminally processed. One can recognise an RRM 1 domain in the interval 11-90 (FVVKVRGLPW…RYVEVFKSNN (80 aa)). Ser-23 carries the phosphoserine modification. Residue Lys-35 forms a Glycyl lysine isopeptide (Lys-Gly) (interchain with G-Cter in SUMO2) linkage. Phosphoserine occurs at positions 54 and 63. Residues Lys-87 and Lys-98 each participate in a glycyl lysine isopeptide (Lys-Gly) (interchain with G-Cter in SUMO2) cross-link. Positions 111-188 (GFVRLRGLPF…RYIEIFKSSR (78 aa)) constitute an RRM 2 domain. Arg-233 carries the dimethylated arginine; alternate modification. Residue Arg-233 is modified to Omega-N-methylarginine; alternate. One copy of the 1-1 repeat lies at 234–249 (GAYGGGYGGYDDYNGY). A 2 X 16 AA Gly-rich approximate repeats region spans residues 234 to 433 (GAYGGGYGGY…YGGQSSMSGY (200 aa)). Tyr-246 carries the post-translational modification Phosphotyrosine. The RRM 3 domain occupies 289–364 (HCVHMRGLPY…RYVELFLNST (76 aa)). Residue Ser-310 is modified to Phosphoserine. 3 tandem repeats follow at residues 354–372 (HRYV…GGAY), 374–392 (HRYV…GGAY), and 418–433 (GGYG…MSGY). The segment at 354 to 392 (HRYVELFLNSTAGASGGAYEHRYVELFLNSTAGASGGAY) is 2 X 19 AA perfect repeats.

Part of a ternary complex containing FUBP2, PTBP1, PTBP2 and HNRNPH1. Identified in the spliceosome C complex. Interacts with IGF2BP1. Interacts with CUGBP1; the interaction is RNA-dependent. Interacts with MBNL1; the interaction in RNA-independent.

The protein localises to the nucleus. Its subcellular location is the nucleoplasm. This protein is a component of the heterogeneous nuclear ribonucleoprotein (hnRNP) complexes which provide the substrate for the processing events that pre-mRNAs undergo before becoming functional, translatable mRNAs in the cytoplasm. Mediates pre-mRNA alternative splicing regulation. Inhibits, together with CUGBP1, insulin receptor (IR) pre-mRNA exon 11 inclusion in myoblast. Binds to the IR RNA. Binds poly(RG). The chain is Heterogeneous nuclear ribonucleoprotein H (Hnrnph1) from Mus musculus (Mouse).